The chain runs to 965 residues: Klaroid protein (965 aa).

The interval Met-1–Phe-20 is disordered. A run of 2 helical transmembrane segments spans residues Thr-303–Leu-323 and Phe-343–Gln-363. The stretch at Ser-585 to Glu-612 forms a coiled coil. The SUN domain occupies Gly-801 to Pro-963.

Core component of the LINC complex which is composed of inner nuclear membrane SUN domain-containing proteins coupled to outer nuclear membrane KASH domain-containing nesprins. Expressed in all cells in the eye disk.

It localises to the membrane. The protein resides in the cytoplasm. It is found in the cytoskeleton. The protein localises to the microtubule organizing center. Its subcellular location is the perinuclear region. In terms of biological role, component of the LINC (LInker of Nucleoskeleton and Cytoskeleton) complex involved in the connection between the nuclear lamina and the cytoskeleton. Is required to nuclear migration in eye and to anchor klar in the nuclear membrane. The chain is Klaroid protein from Drosophila melanogaster (Fruit fly).